The chain runs to 210 residues: uncharacterized protein (210 aa).

This is an uncharacterized protein from Mycobacterium bovis (strain ATCC BAA-935 / AF2122/97).